The sequence spans 639 residues: MGNSLACFCCGGGAGGRGGRHVAPAALPSDPAYDEGLGHSFCYVRPDKFVVPFSADDLVADAKAAAAAEGEATTFRAISGAALSANVSTPLSTSVLLLMPEESSASATASSGFESSESFAAVPLQPVPRFSSGPISAPFSGGFMSGPLERGFQSGPLDAALLSGPLPGTATSGRMGGAVPALRRSLSHGGRRLRNFTRALLARTEKFQDSADLGSPDAAAAAVAACGGDPCGLQWAQGKAGEDRVHVVVSEERGWVFVGIYDGFNGPDATDFLVSNLYAAVHRELRGLLWDQREQNVQHDQRPDQPGSAPSTTASDNQDQWGRRRRTRRSRPPRGADDDQRRWKCEWEQERDCSNLKPPTQQRLRCNSENDHVAVLKALTRALHRTEEAYLDIADKMVGEFPELALMGSCVLAMLMKGEDMYIMNVGDSRAVLATMDSVDLEQISQGSFDGSVGDCPPCLSAVQLTSDHSTSVEEEVIRIRNEHPDDPSAISKDRVKGSLKVTRAFGAGFLKQPKWNDALLEMFRIDYVGSSPYISCNPSLFHHKLSTRDRFLILSSDGLYQYFTNEEAVAQVEMFIATTPEGDPAQHLVEEVLFRAANKAGMDFHELIEIPHGDRRRYHDDVSVIVISLEGRIWRSCV.

The region spanning 227 to 630 (GGDPCGLQWA…DDVSVIVISL (404 aa)) is the PPM-type phosphatase domain. Positions 262 and 263 each coordinate Mn(2+). A disordered region spans residues 295–341 (QNVQHDQRPDQPGSAPSTTASDNQDQWGRRRRTRRSRPPRGADDDQR). Positions 308 to 320 (SAPSTTASDNQDQ) are enriched in polar residues. A compositionally biased stretch (basic residues) spans 323-332 (RRRRTRRSRP). The Mn(2+) site is built by Asp-558 and Asp-621.

This sequence belongs to the PP2C family. In terms of assembly, interacts with XA21 (via juxtamembrane and kinase domains). Requires Mg(2+) as cofactor. Mn(2+) serves as cofactor.

It localises to the cell membrane. The enzyme catalyses O-phospho-L-seryl-[protein] + H2O = L-seryl-[protein] + phosphate. It catalyses the reaction O-phospho-L-threonyl-[protein] + H2O = L-threonyl-[protein] + phosphate. Its function is as follows. Protein phosphatase that acts on XA21 pathogen recognition receptor. Negatively regulates cell death and XA21-mediated innate immunity. This is Protein phosphatase 2C 35 (XB15) from Oryza sativa subsp. japonica (Rice).